Reading from the N-terminus, the 345-residue chain is UDP-3-O-acylglucosamine N-acyltransferase (345 aa).

His-252 serves as the catalytic Proton acceptor.

The protein belongs to the transferase hexapeptide repeat family. LpxD subfamily. In terms of assembly, homotrimer.

The enzyme catalyses a UDP-3-O-[(3R)-3-hydroxyacyl]-alpha-D-glucosamine + a (3R)-hydroxyacyl-[ACP] = a UDP-2-N,3-O-bis[(3R)-3-hydroxyacyl]-alpha-D-glucosamine + holo-[ACP] + H(+). It participates in bacterial outer membrane biogenesis; LPS lipid A biosynthesis. Its function is as follows. Catalyzes the N-acylation of UDP-3-O-acylglucosamine using 3-hydroxyacyl-ACP as the acyl donor. Is involved in the biosynthesis of lipid A, a phosphorylated glycolipid that anchors the lipopolysaccharide to the outer membrane of the cell. This is UDP-3-O-acylglucosamine N-acyltransferase from Rickettsia rickettsii.